The chain runs to 255 residues: Glucanase inhibitor protein 4 (255 aa).

A signal peptide spans 1 to 21 (MKSITTASFALILFGVGAASA). In terms of domain architecture, Peptidase S1 spans 29–255 (VLGGGAVPSG…ESLGMDQLGH (227 aa)). An intrachain disulfide couples Cys56 to Cys72. N-linked (GlcNAc...) asparagine glycans are attached at residues Asn90, Asn105, Asn110, and Asn160. 2 disulfide bridges follow: Cys180/Cys192 and Cys202/Cys235.

Belongs to the peptidase S1 family. In terms of assembly, forms an apoplastic complex with host endoglucanases in tomato leaves during P.infestans infection.

It localises to the secreted. In terms of biological role, secreted effector that suppresses host plant glucan elicitor-mediated defense responses. Targets host endoglucanases and inhibits the endoglucanase-mediated release of elicitor-active glucan oligosaccharides from P.infestans cell walls. The protein is Glucanase inhibitor protein 4 of Phytophthora infestans (Potato late blight agent).